Reading from the N-terminus, the 779-residue chain is Phosphoribosylformylglycinamidine synthase subunit PurL (779 aa).

His-52 is an active-site residue. Tyr-55 and Lys-94 together coordinate ATP. Glu-96 contacts Mg(2+). Substrate contacts are provided by residues 97 to 100 (SHNH) and Arg-119. Catalysis depends on His-98, which acts as the Proton acceptor. Asp-120 provides a ligand contact to Mg(2+). Residue Gln-243 participates in substrate binding. Asp-271 contributes to the Mg(2+) binding site. A substrate-binding site is contributed by 315 to 317 (ESQ). ATP is bound by residues Asn-523 and Gly-560. Position 561 (Asn-561) interacts with Mg(2+). Ser-563 is a binding site for substrate.

The protein belongs to the FGAMS family. As to quaternary structure, monomer. Part of the FGAM synthase complex composed of 1 PurL, 1 PurQ and 2 PurS subunits.

The protein localises to the cytoplasm. The enzyme catalyses N(2)-formyl-N(1)-(5-phospho-beta-D-ribosyl)glycinamide + L-glutamine + ATP + H2O = 2-formamido-N(1)-(5-O-phospho-beta-D-ribosyl)acetamidine + L-glutamate + ADP + phosphate + H(+). It participates in purine metabolism; IMP biosynthesis via de novo pathway; 5-amino-1-(5-phospho-D-ribosyl)imidazole from N(2)-formyl-N(1)-(5-phospho-D-ribosyl)glycinamide: step 1/2. Part of the phosphoribosylformylglycinamidine synthase complex involved in the purines biosynthetic pathway. Catalyzes the ATP-dependent conversion of formylglycinamide ribonucleotide (FGAR) and glutamine to yield formylglycinamidine ribonucleotide (FGAM) and glutamate. The FGAM synthase complex is composed of three subunits. PurQ produces an ammonia molecule by converting glutamine to glutamate. PurL transfers the ammonia molecule to FGAR to form FGAM in an ATP-dependent manner. PurS interacts with PurQ and PurL and is thought to assist in the transfer of the ammonia molecule from PurQ to PurL. The sequence is that of Phosphoribosylformylglycinamidine synthase subunit PurL from Prochlorococcus marinus (strain MIT 9312).